Here is a 394-residue protein sequence, read N- to C-terminus: NAD(P)H-quinone oxidoreductase subunit H 2 (394 aa).

The protein belongs to the complex I 49 kDa subunit family. As to quaternary structure, NDH-1 can be composed of about 15 different subunits; different subcomplexes with different compositions have been identified which probably have different functions.

The protein resides in the cell inner membrane. The enzyme catalyses a plastoquinone + NADH + (n+1) H(+)(in) = a plastoquinol + NAD(+) + n H(+)(out). It carries out the reaction a plastoquinone + NADPH + (n+1) H(+)(in) = a plastoquinol + NADP(+) + n H(+)(out). NDH-1 shuttles electrons from an unknown electron donor, via FMN and iron-sulfur (Fe-S) centers, to quinones in the respiratory and/or the photosynthetic chain. The immediate electron acceptor for the enzyme in this species is believed to be plastoquinone. Couples the redox reaction to proton translocation, and thus conserves the redox energy in a proton gradient. Cyanobacterial NDH-1 also plays a role in inorganic carbon-concentration. The sequence is that of NAD(P)H-quinone oxidoreductase subunit H 2 from Gloeobacter violaceus (strain ATCC 29082 / PCC 7421).